The following is a 213-amino-acid chain: Small ribosomal subunit protein uS3 (213 aa).

In terms of domain architecture, KH type-2 spans 38 to 106 (IRAFVKKLLY…EFSLEVNEIR (69 aa)).

It belongs to the universal ribosomal protein uS3 family. Part of the 30S ribosomal subunit. Forms a tight complex with proteins S10 and S14.

Binds the lower part of the 30S subunit head. Binds mRNA in the 70S ribosome, positioning it for translation. The sequence is that of Small ribosomal subunit protein uS3 from Desulfovibrio desulfuricans (strain ATCC 27774 / DSM 6949 / MB).